A 359-amino-acid polypeptide reads, in one-letter code: Threonine dehydratase biosynthetic, chloroplastic (359 aa).

2 ACT-like domains span residues 184 to 256 (ALLA…NFSH) and 278 to 349 (IFGE…LDNS).

This sequence belongs to the serine/threonine dehydratase family. In terms of assembly, homotetramer. Requires pyridoxal 5'-phosphate as cofactor. In terms of tissue distribution, floral buds of untreated plants. After ABA treatment or mechanical wounding is mostly accumulated in leaves, to a lesser extent in stems, but not in roots. Expressed in anthers, carpel leaves, pith cells, sepals and petals. Not expressed in stomium, vascular bundles, epidermal cells or pollen mother cells.

It localises to the plastid. The protein localises to the chloroplast. It carries out the reaction L-threonine = 2-oxobutanoate + NH4(+). It participates in amino-acid biosynthesis; L-isoleucine biosynthesis; 2-oxobutanoate from L-threonine: step 1/1. The chain is Threonine dehydratase biosynthetic, chloroplastic from Solanum tuberosum (Potato).